The chain runs to 115 residues: uncharacterized protein (115 aa).

This is an uncharacterized protein from Acidianus sp. F28 (AFV-2).